An 87-amino-acid polypeptide reads, in one-letter code: HssA/B-like protein 18 (87 aa).

This sequence belongs to the hssA/B family.

The chain is HssA/B-like protein 18 (hssl18) from Dictyostelium discoideum (Social amoeba).